A 485-amino-acid chain; its full sequence is Hexokinase (485 aa).

A Phosphoserine modification is found at serine 15. The region spanning 21–468 (ANLMEQIHGL…SGVGAAIIAC (448 aa)) is the Hexokinase domain. A hexokinase small subdomain region spans residues 75-208 (TGKETGDFLA…NIPINVVALI (134 aa)). Lysine 111 is a binding site for ATP. The tract at residues 151–177 (PLGFTFSYPASQKKINSGVLQRWTKGF) is glucose-binding. The segment at 209 to 457 (NDTTGTLVAS…HPIQLVAAED (249 aa)) is hexokinase large subdomain.

Monomer and homodimer. The monomeric form is active, the homodimeric form inactive.

The catalysed reaction is a D-hexose + ATP = a D-hexose 6-phosphate + ADP + H(+). The enzyme catalyses D-fructose + ATP = D-fructose 6-phosphate + ADP + H(+). It catalyses the reaction D-glucose + ATP = D-glucose 6-phosphate + ADP + H(+). The protein operates within carbohydrate metabolism; hexose metabolism. Its pathway is carbohydrate degradation; glycolysis; D-glyceraldehyde 3-phosphate and glycerone phosphate from D-glucose: step 1/4. Its function is as follows. Catalyzes the phosphorylation of hexose, such as D-glucose and D-fructose, to hexose 6-phosphate (D-glucose 6-phosphate and D-fructose 6-phosphate, respectively). Has higher affinity for D-glucose. Mediates the initial step of glycolysis by catalyzing phosphorylation of D-glucose to D-glucose 6-phosphate. This is Hexokinase (RAG5) from Kluyveromyces lactis (strain ATCC 8585 / CBS 2359 / DSM 70799 / NBRC 1267 / NRRL Y-1140 / WM37) (Yeast).